Consider the following 569-residue polypeptide: 2-succinyl-5-enolpyruvyl-6-hydroxy-3-cyclohexene-1-carboxylate synthase (569 aa).

Belongs to the TPP enzyme family. MenD subfamily. Homodimer. Mg(2+) serves as cofactor. Requires Mn(2+) as cofactor. It depends on thiamine diphosphate as a cofactor.

The enzyme catalyses isochorismate + 2-oxoglutarate + H(+) = 5-enolpyruvoyl-6-hydroxy-2-succinyl-cyclohex-3-ene-1-carboxylate + CO2. It participates in quinol/quinone metabolism; 1,4-dihydroxy-2-naphthoate biosynthesis; 1,4-dihydroxy-2-naphthoate from chorismate: step 2/7. The protein operates within quinol/quinone metabolism; menaquinone biosynthesis. In terms of biological role, catalyzes the thiamine diphosphate-dependent decarboxylation of 2-oxoglutarate and the subsequent addition of the resulting succinic semialdehyde-thiamine pyrophosphate anion to isochorismate to yield 2-succinyl-5-enolpyruvyl-6-hydroxy-3-cyclohexene-1-carboxylate (SEPHCHC). The polypeptide is 2-succinyl-5-enolpyruvyl-6-hydroxy-3-cyclohexene-1-carboxylate synthase (Haemophilus ducreyi (strain 35000HP / ATCC 700724)).